We begin with the raw amino-acid sequence, 367 residues long: F-box protein At3g56470 (367 aa).

A compositionally biased stretch (basic residues) spans 1 to 18; that stretch reads MVTRRRSKKKKKTKRKKQ. The interval 1 to 24 is disordered; sequence MVTRRRSKKKKKTKRKKQSSKEKE. Positions 26–81 constitute an F-box domain; it reads YQTFINLPCDLLQLVISRLPLKDNIRASAVCKTWHEACVSLRVIHTSPWLIYFSKT.

The chain is F-box protein At3g56470 from Arabidopsis thaliana (Mouse-ear cress).